The primary structure comprises 208 residues: Imidazole glycerol phosphate synthase subunit HisH (208 aa).

One can recognise a Glutamine amidotransferase type-1 domain in the interval 1-206 (MIVIIDYDTG…KEVIRSCKSS (206 aa)). Cysteine 79 acts as the Nucleophile in catalysis. Active-site residues include histidine 181 and glutamate 183.

Heterodimer of HisH and HisF.

The protein resides in the cytoplasm. It catalyses the reaction 5-[(5-phospho-1-deoxy-D-ribulos-1-ylimino)methylamino]-1-(5-phospho-beta-D-ribosyl)imidazole-4-carboxamide + L-glutamine = D-erythro-1-(imidazol-4-yl)glycerol 3-phosphate + 5-amino-1-(5-phospho-beta-D-ribosyl)imidazole-4-carboxamide + L-glutamate + H(+). The catalysed reaction is L-glutamine + H2O = L-glutamate + NH4(+). Its pathway is amino-acid biosynthesis; L-histidine biosynthesis; L-histidine from 5-phospho-alpha-D-ribose 1-diphosphate: step 5/9. IGPS catalyzes the conversion of PRFAR and glutamine to IGP, AICAR and glutamate. The HisH subunit catalyzes the hydrolysis of glutamine to glutamate and ammonia as part of the synthesis of IGP and AICAR. The resulting ammonia molecule is channeled to the active site of HisF. The polypeptide is Imidazole glycerol phosphate synthase subunit HisH (Listeria monocytogenes serotype 4b (strain CLIP80459)).